Here is a 356-residue protein sequence, read N- to C-terminus: Geranylgeranyl pyrophosphate synthase penG (356 aa).

Isopentenyl diphosphate is bound by residues Lys-83, Arg-86, and His-115. Asp-122 and Asp-126 together coordinate Mg(2+). Arg-131 provides a ligand contact to dimethylallyl diphosphate. Position 132 (Arg-132) interacts with isopentenyl diphosphate. Dimethylallyl diphosphate-binding residues include Lys-209, Thr-210, and Gln-243. Position 246 (Asp-246) interacts with Mg(2+). Residues Asn-250, Lys-260, and Lys-270 each contribute to the dimethylallyl diphosphate site.

It belongs to the FPP/GGPP synthase family. Mg(2+) is required as a cofactor.

The catalysed reaction is isopentenyl diphosphate + dimethylallyl diphosphate = (2E)-geranyl diphosphate + diphosphate. The enzyme catalyses isopentenyl diphosphate + (2E)-geranyl diphosphate = (2E,6E)-farnesyl diphosphate + diphosphate. It carries out the reaction isopentenyl diphosphate + (2E,6E)-farnesyl diphosphate = (2E,6E,10E)-geranylgeranyl diphosphate + diphosphate. It participates in secondary metabolite biosynthesis. Geranylgeranyl pyrophosphate synthase; part of the gene cluster that mediates the biosynthesis of the indole diterpenes penitrems. The geranylgeranyl diphosphate (GGPP) synthase ptmG catalyzes the first step in penitrem biosynthesis via conversion of farnesyl pyrophosphate and isopentyl pyrophosphate into geranylgeranyl pyrophosphate (GGPP). Condensation of indole-3-glycerol phosphate with GGPP by the prenyl transferase ptmC then forms 3-geranylgeranylindole (3-GGI). Epoxidation by the FAD-dependent monooxygenase ptmM leads to a epoxidized-GGI that is substrate of the terpene cyclase ptmB for cyclization to yield paspaline. Paspaline is subsequently converted to 13-desoxypaxilline by the cytochrome P450 monooxygenase ptmP, the latter being then converted to paxilline by the cytochrome P450 monooxygenase ptmQ. Paxilline is converted to beta-paxitriol via C-10 ketoreduction by the short-chain dehydrogenase ptmH which can be monoprenylated at the C-20 by the indole diterpene prenyltransferase ptmD. A two-step elimination (acetylation and elimination) process performed by the O-acetyltransferase ptmV and ptmI leads to the production of the prenylated form of penijanthine. The FAD-linked oxidoreductase ptmO then converts the prenylated form of penijanthine into PC-M5 which is in turn transformed into PC-M4 by the aromatic dimethylallyltransferase ptmE. Five sequential oxidative transformations performed by the cytochrome P450 monooxygenases ptmK, ptmU, ptmL, ptmN and ptmJ yield the various penitrem compounds. PtmK, ptmU and ptmM are involved in the formation of the key bicyclic ring of penitrem C via the formation of the intermediates secopenitrem D and penitrem D. PtmL catalyzes the epoxidation of penitrem D and C to yield penitrem B and F, respectively. PtmJ catalyzes the last benzylic hydroxylation to convert penitrem B to prenitrem E and penitrem F to penitrem A. This Penicillium ochrochloron protein is Geranylgeranyl pyrophosphate synthase penG.